A 1208-amino-acid chain; its full sequence is MVGQEKEQSWIPKIFRKKVCTTFIVDLHDDAGGTLCQCGQPRDAHPSVAVEDAFGAAVVTEWNSDEHTTEKPTDAYGDLDFTYSGRKSSNFLRLSDRTDPATVYSLVTRSWGFRAPNLVVSVLGGSEGPVLQTWLQDLLRRGLVRAAQSTGAWIVTGGLHTGIGRHVGVAVRDHQTASTGGSKVVAMGVAPWGVVRNRDMLINPKGSFPARYRWRGDPEDGVEFPLDYNYSAFFLVDDGTYGRMGGENRFRLRFESYVAQQKTGVGGTGIDIPVLLLLIEGDEKMLKRIEDATQAQLPCLLVAGSGGAADCLVETLEDTLAPGSGGLRRGEARDRIRRYFPKGDPEVLQAQVERIMTRKELLTVYSSEDGSEEFETIVLRALVKACGSSEASAYLDELRLAVAWNRVDIAQSELFRGDIQWRSFHLEASLMDALLNDRPEFVRLLISHGLSLGHFLTPVRLAQLYSAVSPNSLIRNLLDQASHASSSKSPPANGAAELRPPNVGQVLRTLLGETCAPRYPARNTRHSLLGQDHRENDSLLMDWANMQQDASFEQAPWSDLLIWALLLNRAQMAIYFWEKGSNSVASALGACLLLRVMARLEWEAEEAARRKDLAAKFESMSVDLFGECYHNSEYRAARLLLRRCPLWGEATCLQLAMQADARAFFAQDGVQSLLTQKWWGEMDSTNPIWALLLTFFCPPLIYTNLILFRKSEEEPTQKDLDFDMDSSMNGAGPLGPAEPSAKVALERRRRRRPGHTLCCGGCSKRWSYFWGAPVTAFLGNVVSYLLFLLLFAHVLLVDFQPTKPGVFELLLYFWAFTLLCEELRQGLGGGWGTLANGGPGPGKAPLRHRLHLYLLDTWNQCDLLALTCFLLGVGCRLTPGLFDLGRTVLCLDFMIFTLRLLHIFTVNKQLGPKIVIVSKMMKDVFFFLFFLCVWLVAYGVATEGILRPQDRSLPSILRRVFYRPYLQIFGQIPQEEMDVALMNPSNCSAERGSWAHPEGPVAGSCVSQYANWLVVLLLIVFLLVANILLLNLLIAMFSYTFNKVHGNSDLYWKAQRYSLIREFHSRPALAPPLIIISHLRLLFKWLRRCHRTNLPASPVFEHFRVCLSKEAERTLLTWESVHKENFLLAQARDKRDSDSERLKRTSQKVDTALKQLGQIREYDRRLRGLEREVQHCSRVLTWMAEALSHSALLPPGGPPPPSPTGSKD.

Residues 1–776 (MVGQEKEQSW…SYFWGAPVTA (776 aa)) are Cytoplasmic-facing. ATP contacts are provided by arginine 172, arginine 215, and leucine 226. Aspartate 271, alanine 393, aspartate 396, and glutamate 397 together coordinate Ca(2+). 2 residues coordinate ATP: arginine 422 and glycine 449. Phosphoserine is present on residues serine 527 and serine 538. A helical membrane pass occupies residues 777-797 (FLGNVVSYLLFLLLFAHVLLV). Over 798-808 (DFQPTKPGVFE) the chain is Extracellular. The helical transmembrane segment at 809–829 (LLLYFWAFTLLCEELRQGLGG) threads the bilayer. Ca(2+) contacts are provided by glutamate 822 and glutamine 825. At 830–857 (GWGTLANGGPGPGKAPLRHRLHLYLLDT) the chain is on the cytoplasmic side. Residues 858–878 (WNQCDLLALTCFLLGVGCRLT) form a helical membrane-spanning segment. Ca(2+) contacts are provided by asparagine 859 and aspartate 862. The Extracellular segment spans residues 879–880 (PG). Residues 881–904 (LFDLGRTVLCLDFMIFTLRLLHIF) traverse the membrane as a helical segment. Over 905 to 924 (TVNKQLGPKIVIVSKMMKDV) the chain is Cytoplasmic. Residues 925-945 (FFFLFFLCVWLVAYGVATEGI) form a helical membrane-spanning segment. The Extracellular segment spans residues 946 to 957 (LRPQDRSLPSIL). Residues 958–978 (RRVFYRPYLQIFGQIPQEEMD) constitute an intramembrane region (pore-forming). The short motif at 969–971 (FGQ) is the Selectivity filter element. Over 979–1013 (VALMNPSNCSAERGSWAHPEGPVAGSCVSQYANWL) the chain is Extracellular. The cysteines at positions 987 and 1005 are disulfide-linked. Residues 1014–1034 (VVLLLIVFLLVANILLLNLLI) traverse the membrane as a helical segment. Over 1035-1208 (AMFSYTFNKV…PPPSPTGSKD (174 aa)) the chain is Cytoplasmic. The tract at residues 1070 to 1170 (APPLIIISHL…EYDRRLRGLE (101 aa)) is calmodulin-binding. Positions 1128 to 1180 (LAQARDKRDSDSERLKRTSQKVDTALKQLGQIREYDRRLRGLEREVQHCSRVL) form a coiled coil. The tract at residues 1130 to 1135 (QARDKR) is mediates modulation by decavanadate and PIP2-binding. Serine 1139 and serine 1146 each carry phosphoserine; by PKC. Residues 1189-1208 (HSALLPPGGPPPPSPTGSKD) are disordered. Pro residues predominate over residues 1195 to 1208 (PGGPPPPSPTGSKD).

Belongs to the transient receptor (TC 1.A.4) family. LTrpC subfamily. TRPM4 sub-subfamily. Homotetramer. Phosphorylation by PKC leads to increase the sensitivity to Ca(2+). Post-translationally, sumoylated. Desumoylated by SENP1. Isoform 1 is highly expressed in the testis with a moderate expression in the brain, spleen and thymus. Isoform 2 is only expressed in the brain and spleen.

It localises to the cell membrane. The protein localises to the endoplasmic reticulum. The protein resides in the golgi apparatus. It carries out the reaction Na(+)(in) = Na(+)(out). The enzyme catalyses K(+)(in) = K(+)(out). Gating is voltage-dependent and repressed by decavanadate. Calmodulin-binding confers the Ca(2+) sensitivity. ATP is able to restore Ca(2+) sensitivity after desensitization. Phosphatidylinositol 4,5-bisphosphate (PIP2)-binding strongly enhances activity, by increasing the channel's Ca(2+) sensitivity and shifting its voltage dependence of activation towards negative potentials. Activity is also enhanced by 3,5-bis(trifluoromethyl)pyrazole derivative (BTP2). Exhibits pronounced temperature sensitivity, with activities strongly intensifying near physiological temperatures. TRPM4 can adopt distinct conformations at different temperatures, markedly influencing where and how ligands interact with them. In terms of biological role, calcium-activated selective cation channel that mediates membrane depolarization. While it is activated by increase in intracellular Ca(2+), it is impermeable to it. Mediates transport of monovalent cations (Na(+) &gt; K(+) &gt; Cs(+) &gt; Li(+)), leading to depolarize the membrane. It thereby plays a central role in cadiomyocytes, neurons from entorhinal cortex, dorsal root and vomeronasal neurons, endocrine pancreas cells, kidney epithelial cells, cochlea hair cells etc. Participates in T-cell activation by modulating Ca(2+) oscillations after T lymphocyte activation, which is required for NFAT-dependent IL2 production. Involved in myogenic constriction of cerebral arteries. Controls insulin secretion in pancreatic beta-cells. May also be involved in pacemaking or could cause irregular electrical activity under conditions of Ca(2+) overload. Affects T-helper 1 (Th1) and T-helper 2 (Th2) cell motility and cytokine production through differential regulation of calcium signaling and NFATC1 localization. Enhances cell proliferation through up-regulation of the beta-catenin signaling pathway. Plays a role in keratinocyte differentiation. Lacks channel activity. The protein is Transient receptor potential cation channel subfamily M member 4 (Trpm4) of Rattus norvegicus (Rat).